Consider the following 141-residue polypeptide: Putative ankyrin repeat protein FPV223 (141 aa).

ANK repeat units lie at residues 21–50, 54–83, 85–114, and 118–140; these read SGRTSLHYAVLFNHKRALSFLLARGADVFK, CMCTPLYYAMLSDQRDMVTMLLHSKKYIVK, RNKLDLHNAIETGNIKVIKTLLDNGVNENS, and DGLTPLHYAVKYGNISIVKMFVI.

The protein is Putative ankyrin repeat protein FPV223 of Vertebrata (FPV).